The following is a 567-amino-acid chain: MEYDYIIIGAGSAGNVLAARLTEDADVTVLLLEAGGPDYRLDFRTQMPAALAFPLQGKRYNWAYETDPEPHMNNRRMECGRGKGLGGSSLINGMCYIRGNAMDFDHWASLSGLEDWSYLDCLPYFRKAETRDIGPNDFHGGEGPVSVTTPKIGNNPLFHAMVAAGVQAGYPRTDDLNGYQQEGFGPMDRTVTPKGRRASTARGYLDQARPRNNLTIITHALTDRILFEGKRATGVRYLKGDAGTGQTAYARREVLLCGGAIASPQILQRSGIGPAELLQRLDIPLVQALPGVGENLQDHLEMYLQYSCKQPVSLYPALLWFNQPKIGIEWLFNGTGVGASNQFEAGGFIRSRDAFTWPNIQYHFLPVAINYNGSNAVKEHGFQAHVGSMRSPSRGRIQVKSKDPRQHPSILFNYMSSEQDWHEFRDAIRITREIIAQPALDPYRGREISPGANVQNDDELDAFIREHAETAYHPSCSCKMGDDKMAVVDGQGRVHGVQGLRVVDASIMSQIITGNLNATTIMIAEKIADRIRGCQPLAKSNAAYFIAGDTPARTSPVRHSLPVTSYP.

4–33 (DYIIIGAGSAGNVLAARLTEDADVTVLLLE) contributes to the FAD binding site. H473 (proton acceptor) is an active-site residue.

It belongs to the GMC oxidoreductase family. It depends on FAD as a cofactor.

It carries out the reaction choline + A = betaine aldehyde + AH2. The enzyme catalyses betaine aldehyde + NAD(+) + H2O = glycine betaine + NADH + 2 H(+). It functions in the pathway amine and polyamine biosynthesis; betaine biosynthesis via choline pathway; betaine aldehyde from choline (cytochrome c reductase route): step 1/1. Functionally, involved in the biosynthesis of the osmoprotectant glycine betaine. Catalyzes the oxidation of choline to betaine aldehyde and betaine aldehyde to glycine betaine at the same rate. The protein is Oxygen-dependent choline dehydrogenase of Yersinia pestis (strain Pestoides F).